Consider the following 101-residue polypeptide: Large ribosomal subunit protein uL23 (101 aa).

Belongs to the universal ribosomal protein uL23 family. Part of the 50S ribosomal subunit. Contacts protein L29, and trigger factor when it is bound to the ribosome.

In terms of biological role, one of the early assembly proteins it binds 23S rRNA. One of the proteins that surrounds the polypeptide exit tunnel on the outside of the ribosome. Forms the main docking site for trigger factor binding to the ribosome. The sequence is that of Large ribosomal subunit protein uL23 from Histophilus somni (strain 129Pt) (Haemophilus somnus).